Consider the following 505-residue polypeptide: MFS efflux pump atnC (505 aa).

The next 12 helical transmembrane spans lie at 48–68 (VLQVILLCASATLTLDIGLTV), 117–137 (LIGWQTVFDGIPAIFLAIPYG), 148–168 (VLLLCFLGLALSTAWALLVCW), 181–201 (LFQCLGGGPAVATAVLEATIA), 216–236 (LQATVLISDILANPLSSVLMA), 240–260 (WTPCFLGVGIQALATVLLIAL), 304–324 (VAGLVFSLLILTVSAESLDFL), 343–363 (LSLRAVVEFGLLLVVGSLLLF), 377–399 (LLIARLSLGLIVAGLLILSLSPT), 403–425 (AILVYTLGAGFQPAIMSLLASLW), 439–459 (TVAIILAVGGVISGPLISLMY), and 469–489 (WVGLPYFVASGLCAGIAGVLL).

The protein belongs to the major facilitator superfamily.

The protein localises to the membrane. The protein operates within secondary metabolite biosynthesis. Its function is as follows. MFS efflux pump; part of the gene cluster that mediates the biosynthesis of aspercryptins, linear lipopeptides built from six amino acids including 2 highly unusual and nonproteogenic amino acids, 2-amino-octanoic acid (2aoa) and 2-amino-dodecanol (2adol). This chain is MFS efflux pump atnC, found in Emericella nidulans (strain FGSC A4 / ATCC 38163 / CBS 112.46 / NRRL 194 / M139) (Aspergillus nidulans).